A 238-amino-acid polypeptide reads, in one-letter code: Cell division protein A (238 aa).

Interacts with CdvB.

Its subcellular location is the cytoplasm. It localises to the nucleoid. It is found in the cell membrane. Part of a cell division machinery. The CdvA, CdvB and CdvC proteins polymerize between segregating nucleoids and persist throughout cell division, forming a successively smaller structure during constriction. CdvA is a membrane interacting protein that recruits ESCRT-III homologs to the membrane. This chain is Cell division protein A, found in Sulfolobus acidocaldarius (strain ATCC 33909 / DSM 639 / JCM 8929 / NBRC 15157 / NCIMB 11770).